The chain runs to 357 residues: Acyl-coenzyme A diphosphatase NUDT19 (357 aa).

The 233-residue stretch at 10-242 folds into the Nudix hydrolase domain; that stretch reads AATVMLAAGW…IWLAPPQFYE (233 aa). Positions 97 to 118 match the Nudix box motif; it reads AALPDDVALRICAIRETFEEAG. Mg(2+) is bound by residues Glu-112 and Glu-116. Lys-300 is subject to N6-succinyllysine. A Microbody targeting signal motif is present at residues 355-357; that stretch reads ARL.

It belongs to the Nudix hydrolase family. Monomer. It depends on Mg(2+) as a cofactor. Mn(2+) is required as a cofactor.

The protein resides in the peroxisome. It catalyses the reaction an acyl-CoA + H2O = an acyl-4'-phosphopantetheine + adenosine 3',5'-bisphosphate + 2 H(+). The catalysed reaction is CoA + H2O = (R)-4'-phosphopantetheine + adenosine 3',5'-bisphosphate + 2 H(+). It carries out the reaction hexanoyl-CoA + H2O = hexanoyl-4'-phosphopantetheine + adenosine 3',5'-bisphosphate + 2 H(+). The enzyme catalyses octanoyl-CoA + H2O = S-octanoyl-4'-phosphopantetheine + adenosine 3',5'-bisphosphate + 2 H(+). It catalyses the reaction butanoyl-CoA + H2O = S-butanoyl-4'-phosphopantetheine + adenosine 3',5'-bisphosphate + 2 H(+). The catalysed reaction is propanoyl-CoA + H2O = propanoyl-4'-phosphopantetheine + adenosine 3',5'-bisphosphate + 2 H(+). It carries out the reaction malonyl-CoA + H2O = malonyl-4'-phosphopantetheine + adenosine 3',5'-bisphosphate + 2 H(+). The enzyme catalyses succinyl-CoA + H2O = succinyl-4'-phosphopantetheine + adenosine 3',5'-bisphosphate + 2 H(+). It catalyses the reaction choloyl-CoA + H2O = S-choloyl-4'-phosphopantetheine + adenosine 3',5'-bisphosphate + 2 H(+). The catalysed reaction is 4,8-dimethylnonanoyl-CoA + H2O = S-(4,8-dimethylnonanoyl)-4'-phosphopantetheine + adenosine 3',5'-bisphosphate + 2 H(+). It carries out the reaction (9Z,12Z,15Z)-octadecatrienoyl-CoA + H2O = S-(9Z,12Z,15Z-octadecatrienoyl)-4'-phosphopantetheine + adenosine 3',5'-bisphosphate + 2 H(+). The enzyme catalyses (9Z,12Z)-octadecadienoyl-CoA + H2O = S-(9Z,12Z-octadecadienoyl)-4'-phosphopantetheine + adenosine 3',5'-bisphosphate + 2 H(+). It catalyses the reaction (9Z)-hexadecenoyl-CoA + H2O = S-(9Z-hexadecenoyl)-4'-phosphopantetheine + adenosine 3',5'-bisphosphate + 2 H(+). The catalysed reaction is (9Z)-tetradecenoyl-CoA + H2O = S-(9Z-tetradecenoyl)-4'-phosphopantetheine + adenosine 3',5'-bisphosphate + 2 H(+). It carries out the reaction (6Z)-octenoyl-CoA + H2O = S-(6Z-octenoyl)-4'-phosphopantetheine + adenosine 3',5'-bisphosphate + 2 H(+). The enzyme catalyses hexadecanoyl-CoA + H2O = S-hexadecanoyl-4'-phosphopantetheine + adenosine 3',5'-bisphosphate + 2 H(+). It catalyses the reaction tetradecanoyl-CoA + H2O = tetradecanoyl-4'-phosphopantetheine + adenosine 3',5'-bisphosphate + 2 H(+). The catalysed reaction is dodecanoyl-CoA + H2O = S-dodecanoyl-4'-phosphopantetheine + adenosine 3',5'-bisphosphate + 2 H(+). It carries out the reaction a 5'-end CoA-ribonucleoside in mRNA + H2O = a 5'-end phospho-adenosine-phospho-ribonucleoside in mRNA + (R)-4'-phosphopantetheine + 2 H(+). Fatty acyl-coenzyme A (CoA) diphosphatase that hydrolyzes fatty acyl-CoA to yield acyl-4'-phosphopantetheine and adenosine 3',5'-bisphosphate. Mediates the hydrolysis of a wide range of CoA esters, including choloyl-CoA and branched-chain fatty-acyl-CoA esters and at low substrate concentrations medium and long-chain fatty-acyl-CoA esters are the primary substrates. Highest activity seen with medium-chain acyl-CoA esters and higher rates of activity seen with the unsaturated acyl-CoA esters compared with the saturated esters. Exhibits decapping activity towards dpCoA-capped RNAs in vitro. The polypeptide is Acyl-coenzyme A diphosphatase NUDT19 (Nudt19) (Rattus norvegicus (Rat)).